The following is a 400-amino-acid chain: 3-phenylpropionate/cinnamic acid dioxygenase ferredoxin--NAD(+) reductase component (400 aa).

Residue 5-36 (TIIIVGGGQAAAMAAASLRQQGFTGELHLFSD) coordinates FAD. Residue 146 to 174 (SVVIVGAGTIGLELAASATQRGCKVTVIE) coordinates NAD(+).

This sequence belongs to the bacterial ring-hydroxylating dioxygenase ferredoxin reductase family. As to quaternary structure, this dioxygenase system consists of four proteins: the two subunits of the hydroxylase component (HcaE and HcaF), a ferredoxin (HcaC) and a ferredoxin reductase (HcaD). It depends on FAD as a cofactor.

The catalysed reaction is 2 reduced [2Fe-2S]-[ferredoxin] + NAD(+) + H(+) = 2 oxidized [2Fe-2S]-[ferredoxin] + NADH. It participates in aromatic compound metabolism; 3-phenylpropanoate degradation. In terms of biological role, part of the multicomponent 3-phenylpropionate dioxygenase, that converts 3-phenylpropionic acid (PP) and cinnamic acid (CI) into 3-phenylpropionate-dihydrodiol (PP-dihydrodiol) and cinnamic acid-dihydrodiol (CI-dihydrodiol), respectively. This chain is 3-phenylpropionate/cinnamic acid dioxygenase ferredoxin--NAD(+) reductase component, found in Escherichia coli (strain SMS-3-5 / SECEC).